The primary structure comprises 132 residues: Riboflavin kinase (132 aa).

13-18 (GLGHGS) serves as a coordination point for CDP. Mg(2+) is bound by residues threonine 40 and asparagine 42. FMN is bound by residues threonine 98 and glutamate 106. CDP is bound at residue 111–114 (VYLR).

The protein belongs to the archaeal riboflavin kinase family. Mg(2+) is required as a cofactor.

It carries out the reaction riboflavin + CTP = CDP + FMN + H(+). It participates in cofactor biosynthesis; FMN biosynthesis; FMN from riboflavin (CTP route): step 1/1. Catalyzes the CTP-dependent phosphorylation of riboflavin (vitamin B2) to form flavin mononucleotide (FMN). The chain is Riboflavin kinase from Aeropyrum pernix (strain ATCC 700893 / DSM 11879 / JCM 9820 / NBRC 100138 / K1).